We begin with the raw amino-acid sequence, 673 residues long: Vasorin (673 aa).

The first 23 residues, 1-23 (MCSRVPLLLPLLLLLALGPGVQG), serve as a signal peptide directing secretion. The LRRNT domain maps to 24 to 51 (CPSGCQCSQPQTVFCTARQGTTVPRDVP). The Extracellular segment spans residues 24–575 (CPSGCQCSQP…VTQAREGNLP (552 aa)). 10 LRR repeats span residues 52–74 (PDTV…SFAG), 77–98 (GLQL…VFQP), 101–122 (NLSN…TFRG), 125–146 (RLER…AFDT), 149–170 (RLLE…RLPR), 171–191 (LLLL…ILDT), 193–214 (NVEA…LFSR), 217–238 (NLHD…IRGL), 240–262 (GLTR…DLAG), and 265–287 (ALQE…SGLF). The N-linked (GlcNAc...) asparagine glycan is linked to Asn-101. The N-linked (GlcNAc...) (complex) asparagine glycan is linked to Asn-117. Asn-273 is a glycosylation site (N-linked (GlcNAc...) asparagine). The LRRCT domain maps to 298 to 351 (NPFNCVCPLSWFGPWVRESHVTLASPEETRCHFPPKNAGRLLLELDYADFGCPA). Residues 358 to 370 (VPTTRPVVREPTA) show a composition bias toward low complexity. A disordered region spans residues 358-404 (VPTTRPVVREPTALSSSLAPTWLSPTEPATEAPSPPSTAPPTVGPVP). Residues 390 to 404 (PSPPSTAPPTVGPVP) are compositionally biased toward pro residues. The region spanning 405–442 (QPQDCPPSTCLNGGTCHLGTRHHLACLCPEGFTGLYCE) is the EGF-like domain. 3 disulfides stabilise this stretch: Cys-409-Cys-420, Cys-414-Cys-430, and Cys-432-Cys-441. The Fibronectin type-III domain maps to 460–558 (PPRSLTLGIE…ACGEAHTPPA (99 aa)). N-linked (GlcNAc...) asparagine glycans are attached at residues Asn-500 and Asn-528. A helical transmembrane segment spans residues 576 to 596 (LLIAPALAAVLLAALAAVGAA). The Cytoplasmic portion of the chain corresponds to 597–673 (YCVRRGRAMA…QSPLHAKPYI (77 aa)).

In terms of assembly, interacts with TGFB1, TGFB2 and TGFB3. Post-translationally, N-glycosylated. N-glycan heterogeneity at Asn-117: Hex5HexNAc4 (minor), dHex1Hex5HexNAc4 (major), Hex6HexNAc5 (minor) and dHex1Hex6HexNAc5 (minor). Expressed at highest levels in aorta, at intermediate levels in kidney and placenta and at lowest levels in brain, heart, liver, lung and skeletal muscle. Within the aorta, the strongest expression is found in the tunica media of the proximal ascending aorta, the descending thoracic aorta, the abdominal aorta and the coronary arteries. Within the kidney, expression is found in the interstitial cells.

It is found in the membrane. The protein localises to the secreted. Functionally, may act as an inhibitor of TGF-beta signaling. The sequence is that of Vasorin (VASN) from Homo sapiens (Human).